Here is a 389-residue protein sequence, read N- to C-terminus: 26S proteasome regulatory subunit 6B homolog (389 aa).

175–182 (GPPGTGKT) is an ATP binding site.

The protein belongs to the AAA ATPase family.

It is found in the cytoplasm. Its subcellular location is the nucleus. The 26S proteasome is involved in the ATP-dependent degradation of ubiquitinated proteins. The regulatory (or ATPase) complex confers ATP dependency and substrate specificity to the 26S complex. In Schizosaccharomyces pombe (strain 972 / ATCC 24843) (Fission yeast), this protein is 26S proteasome regulatory subunit 6B homolog (rpt3).